The primary structure comprises 436 residues: MYHPRELYPSLGAGYRLGPAQPGADSSFPPALAEGYRYPELDTPKLDCFLSGMEAAPRTLAAHPPLPLLPPAMGTEPAPSAPEALHSLPGVSLSLENRELWKEFSSVGTEMIITKAGRRMFPACRVSVTGLDPEARYLFLLDVIPVDGARYRWQGRRWEPSGKAEPRLPDRVYIHPDSPATGAHWMRQPVSFHRVKLTNSTLDPHGHLILHSMHKYQPRIHLVRAAQLCSQHWGGMASFRFPETTFISVTAYQNPQITQLKIAANPFAKGFRENGRNCKRERDARVKRKLRGPEPAATEAYGSGDTPGGPCDSTLGGDIRESDPEQAPAPGEATAAPAPLCGGPSAEAYLLHPAAFHGAPSHLPTRSPSFPEAPDSGRSAPYSAAFLELPHGSGGSGYPAAPPAVPFAPHFLQGGPFPLPYTAPGGYLDVGSKPMY.

The T-box DNA-binding region spans 100–273 (LWKEFSSVGT…ANPFAKGFRE (174 aa)). Over residues 271–284 (FRENGRNCKRERDA) the composition is skewed to basic and acidic residues. 2 disordered regions span residues 271-339 (FREN…APAP) and 360-379 (PSHLPTRSPSFPEAPDSGRS). Residues 325–339 (EQAPAPGEATAAPAP) are compositionally biased toward low complexity.

As to quaternary structure, forms a dimeric complex with DNA (in vitro). As to expression, expressed in fetal tail bud, posterior spinal tissue, intervertebral disk and testis. Also expressed in adult testis, kidney, lung, muscle and thymus.

The protein localises to the nucleus. Its function is as follows. T-box transcription factor that plays an essential role in the determination of the fate of axial stem cells: neural vs mesodermal. Acts in part by down-regulating, a specific enhancer (N1) of SOX2, to inhibit neural development. Seems to play also an essential role in left/right axis determination and acts through effects on Notch signaling around the node as well as through an effect on the morphology and motility of the nodal cilia. The protein is T-box transcription factor TBX6 (TBX6) of Homo sapiens (Human).